Here is a 219-residue protein sequence, read N- to C-terminus: MLAAKSIAGPRAFKASAVRAAPKAGRRTVVVMARKNEVSESYAKALVELADEKGKLEAVHADVDAVAGLMKENAKLSALIMNPVVESDKKRAVLAKIAKEAGFQQYTINWLNLLVEKDRLSLVPEICECFEDLYCQMTDTQVATLRSAVKLEQEQQFLIAKKLQELTGSKNIKLKPVIDSSLIAGFVVEYGSSQIDLSVRGQIERVADQLTKEMTAKLS.

A chloroplast-targeting transit peptide spans 1–33; that stretch reads MLAAKSIAGPRAFKASAVRAAPKAGRRTVVVMA.

The protein belongs to the ATPase delta chain family. As to quaternary structure, F-type ATPases have 2 components, F(1) - the catalytic core - and F(0) - the membrane proton channel. F(1) has five subunits: alpha(3), beta(3), gamma(1), delta(1), epsilon(1). F(0) has four main subunits: a(1), b(1), b'(1) and c(10-14). The alpha and beta chains form an alternating ring which encloses part of the gamma chain. F(1) is attached to F(0) by a central stalk formed by the gamma and epsilon chains, while a peripheral stalk is formed by the delta, b and b' chains.

It is found in the plastid. The protein localises to the chloroplast thylakoid membrane. F(1)F(0) ATP synthase produces ATP from ADP in the presence of a proton or sodium gradient. F-type ATPases consist of two structural domains, F(1) containing the extramembraneous catalytic core and F(0) containing the membrane proton channel, linked together by a central stalk and a peripheral stalk. During catalysis, ATP synthesis in the catalytic domain of F(1) is coupled via a rotary mechanism of the central stalk subunits to proton translocation. Its function is as follows. This protein seems to be part of the stalk that links CF(0) to CF(1). It either transmits conformational changes from CF(0) into CF(1) or is implicated in proton conduction. This is ATP synthase delta chain, chloroplastic from Chlamydomonas reinhardtii (Chlamydomonas smithii).